The primary structure comprises 276 residues: NADPH-dependent 7-cyano-7-deazaguanine reductase (276 aa).

Substrate is bound at residue 83–85 (IES). 85 to 86 (SK) provides a ligand contact to NADPH. The Thioimide intermediate role is filled by C184. Catalysis depends on D191, which acts as the Proton donor. 223–224 (HE) provides a ligand contact to substrate. 252-253 (RG) serves as a coordination point for NADPH.

This sequence belongs to the GTP cyclohydrolase I family. QueF type 2 subfamily. Homodimer.

It localises to the cytoplasm. The enzyme catalyses 7-aminomethyl-7-carbaguanine + 2 NADP(+) = 7-cyano-7-deazaguanine + 2 NADPH + 3 H(+). It functions in the pathway tRNA modification; tRNA-queuosine biosynthesis. Its function is as follows. Catalyzes the NADPH-dependent reduction of 7-cyano-7-deazaguanine (preQ0) to 7-aminomethyl-7-deazaguanine (preQ1). This Pseudomonas aeruginosa (strain LESB58) protein is NADPH-dependent 7-cyano-7-deazaguanine reductase.